We begin with the raw amino-acid sequence, 264 residues long: Glutamate racemase (264 aa).

Substrate-binding positions include 10-11 and 42-43; these read DS and YG. Catalysis depends on Cys-73, which acts as the Proton donor/acceptor. Residue 74 to 75 coordinates substrate; it reads NT. Residue Cys-183 is the Proton donor/acceptor of the active site. Position 184-185 (184-185) interacts with substrate; it reads TH.

The protein belongs to the aspartate/glutamate racemases family.

It carries out the reaction L-glutamate = D-glutamate. Its pathway is cell wall biogenesis; peptidoglycan biosynthesis. In terms of biological role, provides the (R)-glutamate required for cell wall biosynthesis. This Streptococcus equi subsp. zooepidemicus (strain H70) protein is Glutamate racemase.